A 384-amino-acid polypeptide reads, in one-letter code: Intraflagellar transport protein 46 homolog (384 aa).

Disordered regions lie at residues 52–151 (VNAE…PADY) and 358–384 (SATD…LTLD). The span at 87–99 (EKLEEDTKRKKEP) shows a compositional bias: basic and acidic residues. Residues 110 to 138 (DEEEDEDDDDDDDDDDSDDTESDEEEEEP) show a composition bias toward acidic residues. A compositionally biased stretch (polar residues) spans 358–374 (SATDGQKSDTPPASRSA).

The protein belongs to the IFT46 family.

The protein resides in the cytoplasm. The protein localises to the cytoskeleton. It localises to the cilium basal body. Its subcellular location is the cell projection. It is found in the cilium. Forms part of a complex involved in intraflagellar transport (IFT), the bi-directional movement of particles required for the assembly, maintenance and functioning of primary cilia. Plays a role in early embryonic development. In Danio rerio (Zebrafish), this protein is Intraflagellar transport protein 46 homolog.